Consider the following 286-residue polypeptide: Perivitellin-2 31 kDa subunit (286 aa).

A signal peptide spans 1–30; it reads MVKKIHFVMERHASIVAFLLAVLALTESQA. N-linked (GlcNAc...) asparagine glycosylation occurs at Asn-101.

This sequence belongs to the tectonin family. As to quaternary structure, perivitellin-2 is a dimer of heterodimers held together head-to-tail by non-covalent forces. The heterodimer is composed of the tachylectin subunit (31 kDa) and the MACPF subunit (67 kDa) that are disulfide-linked. PV2 is a very high density lipoprotein (VHDL). It contains 3.75% of lipids. The major lipid classes are free sterols and phospholipids and also have significant quantities of energy-providing triacylglycerides and free fatty acids. In terms of tissue distribution, produced by albumen secretory cells. Found in developing eggs.

It localises to the secreted. The protein localises to the target cell membrane. The egg defensive protein perivitellin-2 is a pore-forming two-subunit glycoprotein that affects both the nervous and digestive systems of mammals. In addition, it is a source of both structural and energetic molecules during embryonic development. The tachylectin subunit (31 kDa) binds target membranes while the MACPF subunit (67 kDa) disrupts lipid bilayers forming large pores (inner diameter of about 5.6 nm) altering the plasma membrance conductance. Both in vivo and in vitro, the protein shows wide pH range stability and is resistant to enzymatic proteolysis from gastrointestinal environments. It is cytotoxic to both epithelial and immune cells from the digestive system of mammals. It induces enterocyte death by a lytic mechanism and disrupts enterocyte monolayers in a dose-dependent manner. After oral administration to mice, it binds enterocytes and induces large dose-dependent morphological changes on their small intestine mucosa, reducing the absorptive surface. Additionally, it is detected in the Peyer's patches where it activates lymphoid follicles and triggers apoptosis. The toxin can also traverse the intestinal barrier and induce oral adaptive immunity with evidence of circulating antibody response. The toxin also shows hemagglutination properties thanks to the tachylectin subunit, but has no hemolytic activity. In addition to enterotoxin activity, the toxin also acts as a neurotoxin, since an intraperitoneal injection can induce paralysis of the mice rear limbs, followed by death. The chain is Perivitellin-2 31 kDa subunit from Pomacea maculata (Giant applesnail).